Here is a 306-residue protein sequence, read N- to C-terminus: Ribonuclease Z (306 aa).

The Zn(2+) site is built by histidine 63, histidine 65, aspartate 67, histidine 68, histidine 141, aspartate 208, and histidine 266. Catalysis depends on aspartate 67, which acts as the Proton acceptor.

This sequence belongs to the RNase Z family. In terms of assembly, homodimer. Zn(2+) is required as a cofactor.

It catalyses the reaction Endonucleolytic cleavage of RNA, removing extra 3' nucleotides from tRNA precursor, generating 3' termini of tRNAs. A 3'-hydroxy group is left at the tRNA terminus and a 5'-phosphoryl group is left at the trailer molecule.. Its function is as follows. Zinc phosphodiesterase, which displays some tRNA 3'-processing endonuclease activity. Probably involved in tRNA maturation, by removing a 3'-trailer from precursor tRNA. The sequence is that of Ribonuclease Z from Chlamydia caviae (strain ATCC VR-813 / DSM 19441 / 03DC25 / GPIC) (Chlamydophila caviae).